A 228-amino-acid polypeptide reads, in one-letter code: L-ribulose-5-phosphate 4-epimerase UlaF (228 aa).

Substrate contacts are provided by residues 26–27 (GN), 43–44 (SG), and 72–73 (SS). Residues aspartate 74, histidine 93, and histidine 95 each contribute to the Zn(2+) site. Aspartate 118 serves as the catalytic Proton donor/acceptor. Residue histidine 167 participates in Zn(2+) binding. The active-site Proton donor/acceptor is the tyrosine 225.

The protein belongs to the aldolase class II family. AraD/FucA subfamily. It depends on Zn(2+) as a cofactor.

The catalysed reaction is L-ribulose 5-phosphate = D-xylulose 5-phosphate. It functions in the pathway cofactor degradation; L-ascorbate degradation; D-xylulose 5-phosphate from L-ascorbate: step 4/4. Functionally, catalyzes the isomerization of L-ribulose 5-phosphate to D-xylulose 5-phosphate. Is involved in the anaerobic L-ascorbate utilization. This Escherichia coli (strain SMS-3-5 / SECEC) protein is L-ribulose-5-phosphate 4-epimerase UlaF.